The chain runs to 183 residues: Gamma-crystallin N-A (183 aa).

Beta/gamma crystallin 'Greek key' domains follow at residues 6-46, 47-89, 95-136, and 138-180; these read GKIV…RVES, GAWV…KPIK, YRME…KVYG, and GAWA…RRVV.

Belongs to the beta/gamma-crystallin family. As to quaternary structure, monomer.

In terms of biological role, crystallins are the dominant structural components of the vertebrate eye lens. This chain is Gamma-crystallin N-A (crygna), found in Danio rerio (Zebrafish).